Here is a 491-residue protein sequence, read N- to C-terminus: Monodehydroascorbate reductase 5, chlorplastic (491 aa).

The transit peptide at 1-42 directs the protein to the chloroplast; the sequence is MASTAAAASSQGCISWALRQRGLGGGGARAVPVLPRRRFCVS. Residues 61–64, glutamate 88, arginine 95, lysine 100, and 194–195 contribute to the FAD site; these read GGNA and RD. NAD(+) contacts are provided by residues 217-223, glutamate 241, arginine 247, and glycine 306; that span reads GGYIGME. Position 219 to 223 (219 to 223) interacts with NADP(+); the sequence is YIGME. NADP(+) is bound by residues arginine 247 and glycine 306. Aspartate 344 lines the FAD pocket. Residue 360–361 coordinates NAD(+); that stretch reads EH. 360–361 lines the NADP(+) pocket; that stretch reads EH. Valine 362 serves as a coordination point for FAD. Position 366 (arginine 366) interacts with L-ascorbate. An FAD-binding site is contributed by tyrosine 391. Residue tyrosine 391 participates in NAD(+) binding. Position 391 (tyrosine 391) interacts with NADP(+). Arginine 393 contacts L-ascorbate.

The protein belongs to the FAD-dependent oxidoreductase family. FAD is required as a cofactor.

Its subcellular location is the plastid. It is found in the chloroplast. The enzyme catalyses 2 monodehydro-L-ascorbate radical + NADH + H(+) = 2 L-ascorbate + NAD(+). Functionally, catalyzes the conversion of monodehydroascorbate to ascorbate, oxidizing NADH in the process. Ascorbate is a major antioxidant against reactive oxygen species (ROS) and nitric oxide (NO). The sequence is that of Monodehydroascorbate reductase 5, chlorplastic from Oryza sativa subsp. japonica (Rice).